Reading from the N-terminus, the 415-residue chain is Gamma-glutamyl phosphate reductase (415 aa).

It belongs to the gamma-glutamyl phosphate reductase family.

It is found in the cytoplasm. The enzyme catalyses L-glutamate 5-semialdehyde + phosphate + NADP(+) = L-glutamyl 5-phosphate + NADPH + H(+). The protein operates within amino-acid biosynthesis; L-proline biosynthesis; L-glutamate 5-semialdehyde from L-glutamate: step 2/2. Its function is as follows. Catalyzes the NADPH-dependent reduction of L-glutamate 5-phosphate into L-glutamate 5-semialdehyde and phosphate. The product spontaneously undergoes cyclization to form 1-pyrroline-5-carboxylate. This is Gamma-glutamyl phosphate reductase from Ligilactobacillus salivarius (strain UCC118) (Lactobacillus salivarius).